A 484-amino-acid polypeptide reads, in one-letter code: Putative cysteine ligase BshC (484 aa).

Positions 372–435 (RAFRDRVEGL…AARDEVLARH (64 aa)) form a coiled coil.

Belongs to the BshC family.

This is Putative cysteine ligase BshC from Thermus thermophilus (strain ATCC 27634 / DSM 579 / HB8).